Here is a 61-residue protein sequence, read N- to C-terminus: Small ribosomal subunit protein uS14 (61 aa).

The Zn(2+) site is built by cysteine 24, cysteine 27, cysteine 40, and cysteine 43.

This sequence belongs to the universal ribosomal protein uS14 family. Zinc-binding uS14 subfamily. As to quaternary structure, part of the 30S ribosomal subunit. Contacts proteins S3 and S10. Requires Zn(2+) as cofactor.

Functionally, binds 16S rRNA, required for the assembly of 30S particles and may also be responsible for determining the conformation of the 16S rRNA at the A site. In Borrelia garinii subsp. bavariensis (strain ATCC BAA-2496 / DSM 23469 / PBi) (Borreliella bavariensis), this protein is Small ribosomal subunit protein uS14.